Reading from the N-terminus, the 307-residue chain is tRNA pseudouridine synthase B (307 aa).

Residue Asp-38 is the Nucleophile of the active site.

The protein belongs to the pseudouridine synthase TruB family. Type 1 subfamily.

It catalyses the reaction uridine(55) in tRNA = pseudouridine(55) in tRNA. In terms of biological role, responsible for synthesis of pseudouridine from uracil-55 in the psi GC loop of transfer RNAs. This is tRNA pseudouridine synthase B from Bacillus cytotoxicus (strain DSM 22905 / CIP 110041 / 391-98 / NVH 391-98).